The chain runs to 250 residues: 5-oxoprolinase subunit A (250 aa).

The protein belongs to the LamB/PxpA family. As to quaternary structure, forms a complex composed of PxpA, PxpB and PxpC.

The catalysed reaction is 5-oxo-L-proline + ATP + 2 H2O = L-glutamate + ADP + phosphate + H(+). Catalyzes the cleavage of 5-oxoproline to form L-glutamate coupled to the hydrolysis of ATP to ADP and inorganic phosphate. This chain is 5-oxoprolinase subunit A, found in Paraburkholderia phytofirmans (strain DSM 17436 / LMG 22146 / PsJN) (Burkholderia phytofirmans).